A 78-amino-acid chain; its full sequence is Gas vesicle protein G (78 aa).

This sequence belongs to the gas vesicle GvpG family.

It is found in the gas vesicle. In terms of biological role, might be a minor component of the gas vesicle involved in nucleating their formation. Gas vesicles are hollow, gas filled proteinaceous nanostructures found in some microorganisms. It is not clear what function gas vesicles perform in soil bacteria. The protein is Gas vesicle protein G of Streptomyces sp. (strain CB03234).